The primary structure comprises 275 residues: 4-diphosphocytidyl-2-C-methyl-D-erythritol kinase (275 aa).

Residue Lys14 is part of the active site. Pro98–Ser108 contacts ATP. Residue Asp140 is part of the active site.

Belongs to the GHMP kinase family. IspE subfamily.

It carries out the reaction 4-CDP-2-C-methyl-D-erythritol + ATP = 4-CDP-2-C-methyl-D-erythritol 2-phosphate + ADP + H(+). The protein operates within isoprenoid biosynthesis; isopentenyl diphosphate biosynthesis via DXP pathway; isopentenyl diphosphate from 1-deoxy-D-xylulose 5-phosphate: step 3/6. Its function is as follows. Catalyzes the phosphorylation of the position 2 hydroxy group of 4-diphosphocytidyl-2C-methyl-D-erythritol. This chain is 4-diphosphocytidyl-2-C-methyl-D-erythritol kinase, found in Francisella tularensis subsp. novicida (strain U112).